Reading from the N-terminus, the 124-residue chain is Small ribosomal subunit protein uS12 (124 aa).

The interval 1–32 (MPTIQQLVRKGREDKVVKTKTPALKGSPQRRG) is disordered. Residue Asp-89 is modified to 3-methylthioaspartic acid. Residues 105–124 (QGVKNRKQARSRYGAKKEKS) form a disordered region. A compositionally biased stretch (basic residues) spans 108-118 (KNRKQARSRYG).

It belongs to the universal ribosomal protein uS12 family. In terms of assembly, part of the 30S ribosomal subunit. Contacts proteins S8 and S17. May interact with IF1 in the 30S initiation complex.

In terms of biological role, with S4 and S5 plays an important role in translational accuracy. Functionally, interacts with and stabilizes bases of the 16S rRNA that are involved in tRNA selection in the A site and with the mRNA backbone. Located at the interface of the 30S and 50S subunits, it traverses the body of the 30S subunit contacting proteins on the other side and probably holding the rRNA structure together. The combined cluster of proteins S8, S12 and S17 appears to hold together the shoulder and platform of the 30S subunit. This chain is Small ribosomal subunit protein uS12, found in Kineococcus radiotolerans (strain ATCC BAA-149 / DSM 14245 / SRS30216).